The primary structure comprises 558 residues: 5-aminolevulinate synthase, mitochondrial (558 aa).

A mitochondrion-targeting transit peptide spans 1–25 (MERVVKLAAKHCPFVSKADPSALRR). The tract at residues 103-124 (TTTPVTKKHQMPKHYASDLNGV) is disordered. Arg-152, Ser-265, and Lys-284 together coordinate substrate. Residues Ser-317, His-345, and Thr-374 each contribute to the pyridoxal 5'-phosphate site. Residue Lys-377 is part of the active site. N6-(pyridoxal phosphate)lysine is present on Lys-377. 2 residues coordinate pyridoxal 5'-phosphate: Thr-406 and Thr-407. Thr-492 provides a ligand contact to substrate.

The protein belongs to the class-II pyridoxal-phosphate-dependent aminotransferase family. Homodimer. The cofactor is pyridoxal 5'-phosphate.

It is found in the mitochondrion matrix. It carries out the reaction succinyl-CoA + glycine + H(+) = 5-aminolevulinate + CO2 + CoA. Its pathway is porphyrin-containing compound metabolism; protoporphyrin-IX biosynthesis; 5-aminolevulinate from glycine: step 1/1. Its function is as follows. Catalyzes the synthesis of 5-aminolevulinate (ALA) from succinyl-CoA and glycine, the first and rate-limiting step in heme biosynthesis. This Schizosaccharomyces pombe (strain 972 / ATCC 24843) (Fission yeast) protein is 5-aminolevulinate synthase, mitochondrial.